The sequence spans 302 residues: Spermidine synthase (302 aa).

Residue M1 is modified to N-acetylmethionine. The PABS domain maps to 18–253 (EGWFRETCSL…GQIGFMLCSK (236 aa)). Q49 serves as a coordination point for S-adenosyl 3-(methylsulfanyl)propylamine. Y79 contributes to the putrescine binding site. Residues Q80, D104, E124, 155-156 (DG), and D173 each bind S-adenosyl 3-(methylsulfanyl)propylamine. D173 functions as the Proton acceptor in the catalytic mechanism. Putrescine is bound by residues 173–176 (DSSD) and Y241.

Belongs to the spermidine/spermine synthase family. As to quaternary structure, homodimer or homotetramer.

It catalyses the reaction S-adenosyl 3-(methylsulfanyl)propylamine + putrescine = S-methyl-5'-thioadenosine + spermidine + H(+). The protein operates within amine and polyamine biosynthesis; spermidine biosynthesis; spermidine from putrescine: step 1/1. The activity is thought to be regulated mainly by the availability of decarboxylated S-adenosylmethionine. Catalyzes the production of spermidine from putrescine and decarboxylated S-adenosylmethionine (dcSAM). Has a strong preference for putrescine as substrate, and has very low activity towards 1,3-diaminopropane. Has extremely low activity towards spermidine. This is Spermidine synthase (SRM) from Homo sapiens (Human).